Reading from the N-terminus, the 563-residue chain is Putative cysteine ligase BshC (563 aa).

Positions 493–518 (KEKTYRAGRRKHDELLQQLDKAELNL) form a coiled coil.

The protein belongs to the BshC family.

This chain is Putative cysteine ligase BshC, found in Chlorobaculum tepidum (strain ATCC 49652 / DSM 12025 / NBRC 103806 / TLS) (Chlorobium tepidum).